A 91-amino-acid polypeptide reads, in one-letter code: Small integral membrane protein 12-B (91 aa).

Residues 12-34 (YAPYITFPVAFVVGAVGYQLEWF) traverse the membrane as a helical segment.

The protein belongs to the SMIM12 family.

The protein localises to the membrane. The sequence is that of Small integral membrane protein 12-B (smim12-b) from Xenopus laevis (African clawed frog).